The primary structure comprises 159 residues: Protein-export protein SecB (159 aa).

Belongs to the SecB family. Homotetramer, a dimer of dimers. One homotetramer interacts with 1 SecA dimer.

Its subcellular location is the cytoplasm. One of the proteins required for the normal export of preproteins out of the cell cytoplasm. It is a molecular chaperone that binds to a subset of precursor proteins, maintaining them in a translocation-competent state. It also specifically binds to its receptor SecA. This is Protein-export protein SecB from Burkholderia mallei (strain NCTC 10229).